Reading from the N-terminus, the 293-residue chain is Small ribosomal subunit protein uS2 (293 aa).

The tract at residues 239 to 293 is disordered; that stretch reads PAGGADWEAAPAGFPAAATGEWSEAQPATWESGAAAATGPSTEWADSAPKDTAGW. Low complexity predominate over residues 247-256; that stretch reads AAPAGFPAAA.

Belongs to the universal ribosomal protein uS2 family. In terms of assembly, component of the small ribosomal subunit. Mature ribosomes consist of a small (40S) and a large (60S) subunit. The 40S subunit contains about 33 different proteins and 1 molecule of RNA (18S). The 60S subunit contains about 49 different proteins and 3 molecules of RNA (25S, 5.8S and 5S). Interacts with RPS21.

Its subcellular location is the cytoplasm. Functionally, required for the assembly and/or stability of the 40S ribosomal subunit. Required for the processing of the 20S rRNA-precursor to mature 18S rRNA in a late step of the maturation of 40S ribosomal subunits. This is Small ribosomal subunit protein uS2 from Chaetomium globosum (strain ATCC 6205 / CBS 148.51 / DSM 1962 / NBRC 6347 / NRRL 1970) (Soil fungus).